The primary structure comprises 345 residues: NADPH dehydrogenase (345 aa).

FMN is bound at residue 23-26 (SPMC). Tyr-28 provides a ligand contact to substrate. Residues Ala-60 and Gln-102 each coordinate FMN. 164–167 (HGAH) provides a ligand contact to substrate. FMN contacts are provided by residues Arg-215 and 307-308 (GR).

It belongs to the NADH:flavin oxidoreductase/NADH oxidase family. NamA subfamily. As to quaternary structure, homotetramer. It depends on FMN as a cofactor.

It catalyses the reaction A + NADPH + H(+) = AH2 + NADP(+). In terms of biological role, catalyzes the reduction of the double bond of an array of alpha,beta-unsaturated aldehydes and ketones. It also reduces the nitro group of nitroester and nitroaromatic compounds. It could have a role in detoxification processes. The protein is NADPH dehydrogenase of Bacillus cereus (strain ATCC 10987 / NRS 248).